The following is an 86-amino-acid chain: Large ribosomal subunit protein bL27 (86 aa).

The tract at residues 1 to 22 (MATKKAGGSSRNGRDSAGRRLG) is disordered.

The protein belongs to the bacterial ribosomal protein bL27 family.

This Rickettsia rickettsii (strain Iowa) protein is Large ribosomal subunit protein bL27.